Reading from the N-terminus, the 288-residue chain is Mortality factor 4-like protein 2 (288 aa).

The span at 1 to 15 (MSSRKQGSQPRGQQS) shows a compositional bias: polar residues. The interval 1 to 113 (MSSRKQGSQP…RADPTVESEE (113 aa)) is disordered. The residue at position 71 (Ser-71) is a Phosphoserine. The MRG domain occupies 117 to 288 (NRMEVKVKIP…ASAEYHRKAL (172 aa)).

As to quaternary structure, component of the NuA4 histone acetyltransferase complex which contains the catalytic subunit KAT5/TIP60 and the subunits EP400, TRRAP/PAF400, BRD8/SMAP, EPC1, DMAP1/DNMAP1, RUVBL1/TIP49, RUVBL2, ING3, actin, ACTL6A/BAF53A, MORF4L1/MRG15, MORF4L2/MRGX, MRGBP, YEATS4/GAS41 and VPS72/YL1. The NuA4 complex interacts with MYC and the adenovirus E1A protein. MORF4L1 may also participate in the formation of NuA4 related complexes which lack the KAT5/TIP60 catalytic subunit, but which include the SWI/SNF related protein SRCAP. Component of the MSIN3A histone deacetylase complex, which includes SIN3A, HDAC2, ARID4B, MORF4L1, RBBP4/RbAp48, and RBBP7/RbAp46. Interacts with MRFAP1 and RB1. May also interact with one or more as yet undefined members of the TLE (transducin-like enhancer of split) family of transcriptional repressors.

Its subcellular location is the nucleus. Functionally, component of the NuA4 histone acetyltransferase complex which is involved in transcriptional activation of select genes principally by acetylation of nucleosomal histone H4 and H2A. This modification may both alter nucleosome - DNA interactions and promote interaction of the modified histones with other proteins which positively regulate transcription. This complex may be required for the activation of transcriptional programs associated with oncogene and proto-oncogene mediated growth induction, tumor suppressor mediated growth arrest and replicative senescence, apoptosis, and DNA repair. The NuA4 complex ATPase and helicase activities seem to be, at least in part, contributed by the association of RUVBL1 and RUVBL2 with EP400. NuA4 may also play a direct role in DNA repair when directly recruited to sites of DNA damage. Also a component of the MSIN3A complex which acts to repress transcription by deacetylation of nucleosomal histones. This Macaca fascicularis (Crab-eating macaque) protein is Mortality factor 4-like protein 2 (MORF4L2).